The primary structure comprises 249 residues: Small ribosomal subunit protein eS6 (249 aa).

Residue K14 forms a Glycyl lysine isopeptide (Lys-Gly) (interchain with G-Cter in SUMO2) linkage. The residue at position 35 (E35) is an ADP-ribosyl glutamic acid. R137 carries the post-translational modification (3R)-3-hydroxyarginine. The residue at position 148 (S148) is a Phosphoserine. N6-acetyllysine is present on K211. Over residues 217-229 (MKEAKEKRQEQIA) the composition is skewed to basic and acidic residues. Residues 217 to 249 (MKEAKEKRQEQIAKRRRLSSLRASTSKSESSQK) form a disordered region. S235, S236, S240, S242, S244, and S247 each carry phosphoserine. Low complexity predominate over residues 236-249 (SLRASTSKSESSQK).

The protein belongs to the eukaryotic ribosomal protein eS6 family. Component of the small ribosomal subunit. Part of the small subunit (SSU) processome, composed of more than 70 proteins and the RNA chaperone small nucleolar RNA (snoRNA) U3. In terms of processing, ribosomal protein S6 is the major substrate of protein kinases in eukaryote ribosomes. The phosphorylation is stimulated by growth factors, tumor promoting agents, and mitogens. It is dephosphorylated at growth arrest. Phosphorylated at Ser-235 and Ser-236 by RPS6KA1 and RPS6KA3; phosphorylation at these sites facilitates the assembly of the pre-initiation complex. Specifically hydroxylated (with R stereochemistry) at C-3 of Arg-137 by KDM8. Post-translationally, mono-ADP-ribosylation at Glu-35 by PARP16 inhibits polysome assembly and mRNA loading, thereby inhibiting protein translation.

It is found in the cytoplasm. Its subcellular location is the nucleus. It localises to the nucleolus. Functionally, component of the 40S small ribosomal subunit. Plays an important role in controlling cell growth and proliferation through the selective translation of particular classes of mRNA. Part of the small subunit (SSU) processome, first precursor of the small eukaryotic ribosomal subunit. During the assembly of the SSU processome in the nucleolus, many ribosome biogenesis factors, an RNA chaperone and ribosomal proteins associate with the nascent pre-rRNA and work in concert to generate RNA folding, modifications, rearrangements and cleavage as well as targeted degradation of pre-ribosomal RNA by the RNA exosome. The sequence is that of Small ribosomal subunit protein eS6 (RPS6) from Oryctolagus cuniculus (Rabbit).